Here is a 310-residue protein sequence, read N- to C-terminus: ADP-L-glycero-D-manno-heptose-6-epimerase (310 aa).

NADP(+)-binding positions include 10-11, 31-32, lysine 38, lysine 53, 75-79, and asparagine 92; these read FI, DN, and EGACS. The Proton acceptor role is filled by tyrosine 140. Residue lysine 144 coordinates NADP(+). Asparagine 169 is a binding site for substrate. Residues valine 170 and lysine 178 each contribute to the NADP(+) site. Residue lysine 178 is the Proton acceptor of the active site. Substrate contacts are provided by residues serine 180, histidine 187, 201 to 204, and arginine 209; that span reads FEGS. The residue at position 267 (lysine 267) is an N6-acetyllysine. Tyrosine 272 serves as a coordination point for substrate.

Belongs to the NAD(P)-dependent epimerase/dehydratase family. HldD subfamily. Homopentamer. NADP(+) is required as a cofactor. Requires NAD(+) as cofactor.

The catalysed reaction is ADP-D-glycero-beta-D-manno-heptose = ADP-L-glycero-beta-D-manno-heptose. Its pathway is nucleotide-sugar biosynthesis; ADP-L-glycero-beta-D-manno-heptose biosynthesis; ADP-L-glycero-beta-D-manno-heptose from D-glycero-beta-D-manno-heptose 7-phosphate: step 4/4. It functions in the pathway bacterial outer membrane biogenesis; LPS core biosynthesis. With respect to regulation, completely inhibited by ADP and ADP-glucose, and partially inhibited by ATP and NADH. Its function is as follows. Catalyzes the interconversion between ADP-D-glycero-beta-D-manno-heptose and ADP-L-glycero-beta-D-manno-heptose via an epimerization at carbon 6 of the heptose. The polypeptide is ADP-L-glycero-D-manno-heptose-6-epimerase (hldD) (Escherichia coli (strain K12)).